A 169-amino-acid chain; its full sequence is 6,7-dimethyl-8-ribityllumazine synthase (169 aa).

5-amino-6-(D-ribitylamino)uracil contacts are provided by residues Tyr-30, 61–63 (ALE), and 90–92 (CVI). Position 95 to 96 (95 to 96 (ET)) interacts with (2S)-2-hydroxy-3-oxobutyl phosphate. His-98 serves as the catalytic Proton donor. Asn-123 is a binding site for 5-amino-6-(D-ribitylamino)uracil. Arg-137 is a binding site for (2S)-2-hydroxy-3-oxobutyl phosphate.

This sequence belongs to the DMRL synthase family.

The enzyme catalyses (2S)-2-hydroxy-3-oxobutyl phosphate + 5-amino-6-(D-ribitylamino)uracil = 6,7-dimethyl-8-(1-D-ribityl)lumazine + phosphate + 2 H2O + H(+). The protein operates within cofactor biosynthesis; riboflavin biosynthesis; riboflavin from 2-hydroxy-3-oxobutyl phosphate and 5-amino-6-(D-ribitylamino)uracil: step 1/2. Its function is as follows. Catalyzes the formation of 6,7-dimethyl-8-ribityllumazine by condensation of 5-amino-6-(D-ribitylamino)uracil with 3,4-dihydroxy-2-butanone 4-phosphate. This is the penultimate step in the biosynthesis of riboflavin. The sequence is that of 6,7-dimethyl-8-ribityllumazine synthase from Methylorubrum populi (strain ATCC BAA-705 / NCIMB 13946 / BJ001) (Methylobacterium populi).